The sequence spans 142 residues: HTH-type transcriptional regulator MntR (142 aa).

Positions 1 to 63 (MTTPSMEDYI…YEKYRGLVLT (63 aa)) constitute an HTH dtxR-type domain. Asp-8, Glu-11, His-77, Glu-99, Glu-102, and His-103 together coordinate Mn(2+).

The protein belongs to the DtxR/MntR family. Homodimer.

It localises to the cytoplasm. Its activity is regulated as follows. DNA binding is strongly activated by Mn(2+). Functionally, central regulator of manganese homeostasis. This chain is HTH-type transcriptional regulator MntR, found in Bacillus velezensis (strain DSM 23117 / BGSC 10A6 / LMG 26770 / FZB42) (Bacillus amyloliquefaciens subsp. plantarum).